A 1190-amino-acid polypeptide reads, in one-letter code: Ras-specific guanine nucleotide-releasing factor 2 (1190 aa).

The region spanning Glu22–Tyr133 is the PH 1 domain. The stretch at Glu155–Arg193 forms a coiled coil. The IQ domain occupies Asp205–Cys234. The 187-residue stretch at Lys243 to Glu429 folds into the DH domain. The region spanning Pro470–Asp588 is the PH 2 domain. Residues Lys635–Gly755 enclose the N-terminal Ras-GEF domain. The disordered stretch occupies residues Val713–Leu744. Residues Ser725 and Ser726 each carry the phosphoserine modification. Residue Ser736 is modified to Phosphoserine; by CDK5. The segment at Lys743 to Asn751 is regulates proteasomal degradation. Ser745 and Ser749 each carry phosphoserine. The disordered stretch occupies residues Leu757 to Thr826. The span at Thr760–Ala776 shows a compositional bias: low complexity. Residues Thr798 to Pro810 show a composition bias toward polar residues. Phosphoserine occurs at positions 801, 805, and 925. The 233-residue stretch at Ser955–Arg1187 folds into the Ras-GEF domain. A responsible of the affinity for farnesylated versus geranylgeranylated Ras region spans residues Ala1052–Lys1081.

As to quaternary structure, homooligomer and heterooligomer with RASGRF1. Interacts with Ras and RAC1. Interacts in a calcium-dependent manner with calmodulin. Interacts with CDK5R1 and probably EPB49. Interacts with the AMPA receptor through GRIA1. Interacts with microtubules. Phosphorylated by CDK5; down-regulates RASGRF2-mediated RAC1 activation. Post-translationally, ubiquitinated upon interaction with Ras. Ubiquitination leads to degradation through the 26S proteasome. In terms of tissue distribution, widely expressed. Detected in brain, lung, spleen, pancreas, kidney, liver, heart, mammary gland and skeletal muscle.

The protein localises to the cytoplasm. The protein resides in the cell membrane. It is found in the endoplasmic reticulum membrane. Functionally, functions as a calcium-regulated nucleotide exchange factor activating both Ras and RAC1 through the exchange of bound GDP for GTP. Preferentially activates HRAS in vivo compared to RRAS based on their different types of prenylation. Functions in synaptic plasticity by contributing to the induction of long term potentiation. The protein is Ras-specific guanine nucleotide-releasing factor 2 (Rasgrf2) of Rattus norvegicus (Rat).